Reading from the N-terminus, the 160-residue chain is SKP1-like protein 1A (160 aa).

The tract at residues 102 to 160 is interaction with the F-box domain of F-box proteins; the sequence is ILAANYLNIKNLLDLTCQTVADMIKGKTPEEIRTTFNIKNDFTPEEEEEVRRENQWAFE.

This sequence belongs to the SKP1 family. As to quaternary structure, part of a SCF E3 ubiquitin ligase complex composed of SKP1, CUL1, RBX1 (RBX1A or RBX1B) and F-box proteins. Interacts with SKIP1, SKIP2, SKIP3, SKIP4, SKIP6, FIB1/SKIP7, SKIP8, PP2A11/SKIP10, SKIP11, PP2B11/SKIP12, PP2A14/SKIP13, SKIP14, SKIP15, SKIP16, SKIP19/FBL20, SKIP20, PP2B1/SKIP21, SKIP22, SKIP23, SKIP24, SKIP25, TULP10/SKIP26, SKIP27, SKIP28/MEE11, AFR/SKIP29, SKIP30, SKIP31, SKIP32/FBP7, SKIP33, SKIP35, ADO1/ZTL, ADO2/LKP2, ADO3/FKF1, AFR, COI1, DOR, EBF1, EBF2, EID1, ORE9, PP2A13/SKIP9, TIR1, UFO, SKP2A, CPR1/CPR30, FBL17, NUP58, At1g55000, At1g67340, At1g78100, At3g04660, At3g61590, At4g38940 and At5g49610. The SKP1A subunit of the SCF E3 ubiquitin ligase complex can interact directly with KIN10, KIN11 and the proteasome subunit PAD1. This interaction can be disrupted by PRL1. In case of polerovirus infection, part of a SCF P0 complex composed of the viral silencing suppressor P0, SKP1 and CUL1. Interacts with turnip yellows virus P0. Interacts with VBF and Agrobacterium virF. Binds to KIB1. As to expression, accumulates only in meristematic cells. Expressed in inflorescence, shoot and root apical meristems, as well as in developing organs such as gametocytes and seeds. Also detected in cortical layer and epidermis of roots, leaves, pith and vascular bundle of young stem, young floral buds and organ primordia, pollen and through the valve of siliques. Not detectable in mature root tissues.

The protein localises to the nucleus. Its subcellular location is the cytoplasm. The protein resides in the cytoskeleton. It localises to the spindle. It is found in the phragmoplast. It functions in the pathway protein modification; protein ubiquitination. Its function is as follows. Involved in ubiquitination and subsequent proteasomal degradation of target proteins. Together with CUL1, RBX1 and a F-box protein, it forms a SCF E3 ubiquitin ligase complex. The functional specificity of this complex depends on the type of F-box protein. In the SCF complex, it serves as an adapter that links the F-box protein to CUL1. SCF(UFO) is required for vegetative and floral organ development as well as for male gametogenesis. SCF(TIR1) is involved in auxin signaling pathway. SCF(COI1) regulates responses to jasmonates. SCF(EID1) and SCF(AFR) are implicated in phytochrome A light signaling. SCF(ADO1), SCF(ADO2), SCF(ADO3) are related to the circadian clock. SCF(ORE9) seems to be involved in senescence. SCF(EBF1/EBF2) may regulate ethylene signaling. Plays a role during embryogenesis and early postembryonic development, especially during cell elongation and division. Contributes to the correct chromosome segregation during tetrad formation. The sequence is that of SKP1-like protein 1A from Arabidopsis thaliana (Mouse-ear cress).